We begin with the raw amino-acid sequence, 265 residues long: Protein HesA, vegetative (265 aa).

This sequence belongs to the HesA/MoeB/ThiF family.

The sequence is that of Protein HesA, vegetative (hesA2) from Trichormus variabilis (strain ATCC 29413 / PCC 7937) (Anabaena variabilis).